The primary structure comprises 500 residues: Probable malate:quinone oxidoreductase (500 aa).

It belongs to the MQO family. The cofactor is FAD.

The enzyme catalyses (S)-malate + a quinone = a quinol + oxaloacetate. The protein operates within carbohydrate metabolism; tricarboxylic acid cycle; oxaloacetate from (S)-malate (quinone route): step 1/1. In Halalkalibacterium halodurans (strain ATCC BAA-125 / DSM 18197 / FERM 7344 / JCM 9153 / C-125) (Bacillus halodurans), this protein is Probable malate:quinone oxidoreductase.